The sequence spans 64 residues: Beta-defensin 1 (64 aa).

Positions Met1–Gly20 are cleaved as a signal peptide. A propeptide spanning residues Leu21–Lys23 is cleaved from the precursor. Intrachain disulfides connect Cys31–Cys60, Cys38–Cys53, and Cys43–Cys61.

The protein belongs to the beta-defensin family. As to quaternary structure, monomer. Homodimer.

Its subcellular location is the secreted. The protein localises to the membrane. Its function is as follows. Has bactericidal activity. May act as a ligand for C-C chemokine receptor CCR6. Positively regulates the sperm motility and bactericidal activity in a CCR6-dependent manner. Binds to CCR6 and triggers Ca2+ mobilization in the sperm which is important for its motility. This is Beta-defensin 1 (DEFB1) from Sus scrofa (Pig).